Reading from the N-terminus, the 59-residue chain is Large ribosomal subunit protein uL30 (59 aa).

The protein belongs to the universal ribosomal protein uL30 family. Part of the 50S ribosomal subunit.

This chain is Large ribosomal subunit protein uL30, found in Buchnera aphidicola subsp. Schizaphis graminum (strain Sg).